A 227-amino-acid polypeptide reads, in one-letter code: Protein PhlB (227 aa).

Positions 1 to 35 (MPEGRRLRRALAIALLALVAVTGLLMMAKEQQMGQ) are cleaved as a signal peptide. 4 ANK repeats span residues 75–104 (RQVT…DPAA), 108–137 (DGNS…QMNV), 142–171 (TGAT…DTTL), and 175–204 (LGDT…MPGR).

In terms of biological role, cell-protective protein that neutralizes the intracellular lysis capacity of phospholipase A1 through a direct interaction with the enzyme. In Serratia liquefaciens, this protein is Protein PhlB (phlB).